A 192-amino-acid chain; its full sequence is Cytidylate kinase (192 aa).

Position 12–20 (12–20 (GLAGSGTTT)) interacts with ATP.

The protein belongs to the cytidylate kinase family. Type 2 subfamily.

It is found in the cytoplasm. It carries out the reaction CMP + ATP = CDP + ADP. The catalysed reaction is dCMP + ATP = dCDP + ADP. This Pyrococcus furiosus (strain ATCC 43587 / DSM 3638 / JCM 8422 / Vc1) protein is Cytidylate kinase.